We begin with the raw amino-acid sequence, 266 residues long: Translation initiation factor 2 subunit alpha (266 aa).

Residues 12–83 (GEILIATVKQ…RKGTVDVSLK (72 aa)) enclose the S1 motif domain.

It belongs to the eIF-2-alpha family. As to quaternary structure, heterotrimer composed of an alpha, a beta and a gamma chain.

EIF-2 functions in the early steps of protein synthesis by forming a ternary complex with GTP and initiator tRNA. This is Translation initiation factor 2 subunit alpha from Saccharolobus islandicus (strain Y.N.15.51 / Yellowstone #2) (Sulfolobus islandicus).